The sequence spans 929 residues: Ribonucleoside-diphosphate reductase large chain (929 aa).

Residues 1-92 (MYVKKRDGRQ…VSNLHKQTKK (92 aa)) form the ATP-cone domain. ATP contacts are provided by residues 5–6 (KR), 11–17 (ERVQFDK), T53, and D57. 2 residues coordinate GDP: S202 and S217. An intrachain disulfide couples C218 to C444. DTTP contacts are provided by residues 226 to 228 (DSI), K243, R256, and 263 to 264 (AG). N427 is a binding site for GDP. Residue N427 is the Proton acceptor of the active site. Catalysis depends on C429, which acts as the Cysteine radical intermediate. Residues E431 and 605-608 (TAST) contribute to the GDP site. E431 functions as the Proton acceptor in the catalytic mechanism. The segment at 789–904 (ENTSGPRPYA…RDENIYSNAP (116 aa)) is disordered. The segment covering 800–809 (TGVSGTSTPI) has biased composition (polar residues). A compositionally biased stretch (basic and acidic residues) spans 868 to 884 (VKTEDIGSPLLERKEGQ). Over residues 885–894 (NEDVDEDSQE) the composition is skewed to acidic residues.

Belongs to the ribonucleoside diphosphate reductase large chain family.

It catalyses the reaction a 2'-deoxyribonucleoside 5'-diphosphate + [thioredoxin]-disulfide + H2O = a ribonucleoside 5'-diphosphate + [thioredoxin]-dithiol. Under complex allosteric control mediated by deoxynucleoside triphosphates and ATP binding to separate specificity and activation sites on the large subunit. The type of nucleotide bound at the specificity site determines substrate preference. It seems probable that ATP makes the enzyme reduce CDP and UDP, dGTP favors ADP reduction and dTTP favors GDP reduction. Stimulated by ATP and inhibited by dATP binding to the activity site. Its function is as follows. Provides the precursors necessary for DNA synthesis. Catalyzes the biosynthesis of deoxyribonucleotides from the corresponding ribonucleotides. The polypeptide is Ribonucleoside-diphosphate reductase large chain (rnr-1) (Neurospora crassa (strain ATCC 24698 / 74-OR23-1A / CBS 708.71 / DSM 1257 / FGSC 987)).